Here is an 87-residue protein sequence, read N- to C-terminus: Toxin Css39.8 (87 aa).

Residues 1 to 19 (MNSLLMITACFFLIGTVWA) form the signal peptide. Residues 20 to 85 (KEGYLVNKST…TYPLPNKSCS (66 aa)) form the LCN-type CS-alpha/beta domain. 4 disulfides stabilise this stretch: cysteine 31–cysteine 84, cysteine 35–cysteine 60, cysteine 44–cysteine 65, and cysteine 48–cysteine 67.

The protein belongs to the long (4 C-C) scorpion toxin superfamily. Sodium channel inhibitor family. Beta subfamily. As to expression, expressed by the venom gland.

It is found in the secreted. In terms of biological role, beta toxins bind voltage-independently at site-4 of sodium channels (Nav) and shift the voltage of activation toward more negative potentials thereby affecting sodium channel activation and promoting spontaneous and repetitive firing. This toxin is lethal to crustaceans (freshwater crayfish (Cambarellus montezumae spp.)), it provokes a reversible paralysis to insects (crickets (Achaeta spp.)), but is not toxic to mice. At high concentrations, it does displace the (beta) mammal-specific toxin Cn2 from rat brain synaptosomes. In Centruroides suffusus (Durango bark scorpion), this protein is Toxin Css39.8.